We begin with the raw amino-acid sequence, 932 residues long: Protocadherin gamma-A9 (932 aa).

Positions Met1 to Ala28 are cleaved as a signal peptide. Cadherin domains are found at residues Ser29–Phe133, Gln134–Phe242, Ala243–Val347, Thr348–Phe452, Ser453–Ile562, and Asp570–Asp683. At Ser29–Tyr692 the chain is on the extracellular side. Residues Asn47 and Asn127 are each glycosylated (N-linked (GlcNAc...) asparagine). N-linked (GlcNAc...) asparagine glycans are attached at residues Asn389, Asn419, and Asn545. The chain crosses the membrane as a helical span at residues Leu693–Ala713. Residues Leu714–Lys932 lie on the Cytoplasmic side of the membrane. Disordered stretches follow at residues Asp803–Asn841 and Ala902–Lys932. The segment covering Trp816–Asn841 has biased composition (polar residues). Basic residues predominate over residues Asn922–Lys932.

Its subcellular location is the cell membrane. Functionally, potential calcium-dependent cell-adhesion protein. May be involved in the establishment and maintenance of specific neuronal connections in the brain. The protein is Protocadherin gamma-A9 (PCDHGA9) of Pan troglodytes (Chimpanzee).